We begin with the raw amino-acid sequence, 398 residues long: Elongation factor Tu (398 aa).

One can recognise a tr-type G domain in the interval 10–207 (KPHVNIGTIG…TVDEYIPEPE (198 aa)). The interval 19 to 26 (GHVDHGKT) is G1. 19 to 26 (GHVDHGKT) contacts GTP. Position 26 (Thr-26) interacts with Mg(2+). Positions 63-67 (GITIN) are G2. Residues 84-87 (DAPG) form a G3 region. Residues 84-88 (DAPGH) and 139-142 (NKVD) contribute to the GTP site. The G4 stretch occupies residues 139–142 (NKVD). The tract at residues 177 to 179 (SAL) is G5.

This sequence belongs to the TRAFAC class translation factor GTPase superfamily. Classic translation factor GTPase family. EF-Tu/EF-1A subfamily. Monomer.

The protein resides in the cytoplasm. It carries out the reaction GTP + H2O = GDP + phosphate + H(+). Its function is as follows. GTP hydrolase that promotes the GTP-dependent binding of aminoacyl-tRNA to the A-site of ribosomes during protein biosynthesis. The sequence is that of Elongation factor Tu from Streptococcus agalactiae serotype Ia (strain ATCC 27591 / A909 / CDC SS700).